The sequence spans 450 residues: 3-phosphoshikimate 1-carboxyvinyltransferase (450 aa).

The interval 1-26 (MSGHGTPIPMTSRRASPLKGEAHVPG) is disordered. Residues Lys28, Ser29, and Arg33 each contribute to the 3-phosphoshikimate site. Position 28 (Lys28) interacts with phosphoenolpyruvate. 2 residues coordinate phosphoenolpyruvate: Gly101 and Arg129. Residues Ser174, Gln176, Asp327, and Lys354 each contribute to the 3-phosphoshikimate site. A phosphoenolpyruvate-binding site is contributed by Gln176. Asp327 serves as the catalytic Proton acceptor. 2 residues coordinate phosphoenolpyruvate: Arg358 and Arg403.

This sequence belongs to the EPSP synthase family. Monomer.

It localises to the cytoplasm. It carries out the reaction 3-phosphoshikimate + phosphoenolpyruvate = 5-O-(1-carboxyvinyl)-3-phosphoshikimate + phosphate. The protein operates within metabolic intermediate biosynthesis; chorismate biosynthesis; chorismate from D-erythrose 4-phosphate and phosphoenolpyruvate: step 6/7. Catalyzes the transfer of the enolpyruvyl moiety of phosphoenolpyruvate (PEP) to the 5-hydroxyl of shikimate-3-phosphate (S3P) to produce enolpyruvyl shikimate-3-phosphate and inorganic phosphate. In Ruegeria sp. (strain TM1040) (Silicibacter sp.), this protein is 3-phosphoshikimate 1-carboxyvinyltransferase.